Here is a 253-residue protein sequence, read N- to C-terminus: 3-dehydroquinate dehydratase (253 aa).

3-dehydroquinate is bound by residues 46–48 (EFR) and Arg82. Catalysis depends on His143, which acts as the Proton donor/acceptor. Lys170 (schiff-base intermediate with substrate) is an active-site residue. 3-dehydroquinate contacts are provided by Arg213, Ser232, and Gln236.

This sequence belongs to the type-I 3-dehydroquinase family. As to quaternary structure, homodimer.

It carries out the reaction 3-dehydroquinate = 3-dehydroshikimate + H2O. Its pathway is metabolic intermediate biosynthesis; chorismate biosynthesis; chorismate from D-erythrose 4-phosphate and phosphoenolpyruvate: step 3/7. In terms of biological role, involved in the third step of the chorismate pathway, which leads to the biosynthesis of aromatic amino acids. Catalyzes the cis-dehydration of 3-dehydroquinate (DHQ) and introduces the first double bond of the aromatic ring to yield 3-dehydroshikimate. This Clostridium novyi (strain NT) protein is 3-dehydroquinate dehydratase.